The primary structure comprises 85 residues: Putative defensin-like protein 79 (85 aa).

A signal peptide spans 1 to 31 (MKSEKSADAYGTYFLLISTIFLLFIARQASS). 4 disulfide bridges follow: cysteine 37–cysteine 69, cysteine 44–cysteine 60, cysteine 47–cysteine 67, and cysteine 51–cysteine 68.

This sequence belongs to the DEFL family.

The protein resides in the secreted. The sequence is that of Putative defensin-like protein 79 from Arabidopsis thaliana (Mouse-ear cress).